Reading from the N-terminus, the 147-residue chain is Large ribosomal subunit protein bL9 (147 aa).

The protein belongs to the bacterial ribosomal protein bL9 family.

In terms of biological role, binds to the 23S rRNA. In Cytophaga hutchinsonii (strain ATCC 33406 / DSM 1761 / CIP 103989 / NBRC 15051 / NCIMB 9469 / D465), this protein is Large ribosomal subunit protein bL9.